Here is a 233-residue protein sequence, read N- to C-terminus: Opacity protein opA67 (233 aa).

Residue Ala1 is a signal peptide.

Belongs to the opacity porin family.

The protein resides in the cell outer membrane. Implicated in a number of adherence functions. OPA proteins are implicated in pathogenesis and are subject to phase variation. This chain is Opacity protein opA67, found in Neisseria gonorrhoeae.